Reading from the N-terminus, the 141-residue chain is MLMPKRVKYRKQQRGHNRGMAHRGNTVAFGEYGLMALEATWMTSRQIEAARRAISHHVKRGGKIWIRIFPDKPVTAKPAETRMGSGKGAVDHYVAVIKPGRILFELAGVRPEVAHEALERAAQKLPIKCKIVPREDLEGAA.

The segment at 1–21 is disordered; sequence MLMPKRVKYRKQQRGHNRGMA.

Belongs to the universal ribosomal protein uL16 family. In terms of assembly, part of the 50S ribosomal subunit.

Functionally, binds 23S rRNA and is also seen to make contacts with the A and possibly P site tRNAs. This Roseiflexus sp. (strain RS-1) protein is Large ribosomal subunit protein uL16.